A 388-amino-acid polypeptide reads, in one-letter code: Succinate--CoA ligase [ADP-forming] subunit beta (388 aa).

The 236-residue stretch at 9-244 (KEIFRSMGVA…LEEEDPKEIE (236 aa)) folds into the ATP-grasp domain. ATP contacts are provided by residues lysine 46, 53 to 55 (GRG), glutamate 99, cysteine 102, and glutamate 107. Mg(2+) is bound by residues asparagine 199 and aspartate 213. Residues asparagine 264 and 321-323 (GIM) each bind substrate.

Belongs to the succinate/malate CoA ligase beta subunit family. Heterotetramer of two alpha and two beta subunits. Requires Mg(2+) as cofactor.

It catalyses the reaction succinate + ATP + CoA = succinyl-CoA + ADP + phosphate. The catalysed reaction is GTP + succinate + CoA = succinyl-CoA + GDP + phosphate. It functions in the pathway carbohydrate metabolism; tricarboxylic acid cycle; succinate from succinyl-CoA (ligase route): step 1/1. In terms of biological role, succinyl-CoA synthetase functions in the citric acid cycle (TCA), coupling the hydrolysis of succinyl-CoA to the synthesis of either ATP or GTP and thus represents the only step of substrate-level phosphorylation in the TCA. The beta subunit provides nucleotide specificity of the enzyme and binds the substrate succinate, while the binding sites for coenzyme A and phosphate are found in the alpha subunit. This is Succinate--CoA ligase [ADP-forming] subunit beta from Staphylococcus epidermidis (strain ATCC 35984 / DSM 28319 / BCRC 17069 / CCUG 31568 / BM 3577 / RP62A).